The primary structure comprises 344 residues: Phosphate acyltransferase (344 aa).

The protein belongs to the PlsX family. Homodimer. Probably interacts with PlsY.

The protein localises to the cytoplasm. The enzyme catalyses a fatty acyl-[ACP] + phosphate = an acyl phosphate + holo-[ACP]. Its pathway is lipid metabolism; phospholipid metabolism. In terms of biological role, catalyzes the reversible formation of acyl-phosphate (acyl-PO(4)) from acyl-[acyl-carrier-protein] (acyl-ACP). This enzyme utilizes acyl-ACP as fatty acyl donor, but not acyl-CoA. The polypeptide is Phosphate acyltransferase (Actinobacillus pleuropneumoniae serotype 5b (strain L20)).